The primary structure comprises 448 residues: tRNA(Ile)-lysidine synthase (448 aa).

Residue 25 to 30 (SGGSDS) coordinates ATP.

This sequence belongs to the tRNA(Ile)-lysidine synthase family.

It is found in the cytoplasm. It carries out the reaction cytidine(34) in tRNA(Ile2) + L-lysine + ATP = lysidine(34) in tRNA(Ile2) + AMP + diphosphate + H(+). Functionally, ligates lysine onto the cytidine present at position 34 of the AUA codon-specific tRNA(Ile) that contains the anticodon CAU, in an ATP-dependent manner. Cytidine is converted to lysidine, thus changing the amino acid specificity of the tRNA from methionine to isoleucine. In Brucella abortus (strain S19), this protein is tRNA(Ile)-lysidine synthase.